We begin with the raw amino-acid sequence, 216 residues long: Pyrophosphatase PpaX (216 aa).

Asp-12 serves as the catalytic Nucleophile.

The protein belongs to the HAD-like hydrolase superfamily. PpaX family. The cofactor is Mg(2+).

The enzyme catalyses diphosphate + H2O = 2 phosphate + H(+). In terms of biological role, hydrolyzes pyrophosphate formed during P-Ser-HPr dephosphorylation by HPrK/P. Might play a role in controlling the intracellular pyrophosphate pool. The chain is Pyrophosphatase PpaX from Bacillus pumilus (strain SAFR-032).